The primary structure comprises 106 residues: ATP synthase-coupling factor 6, mitochondrial (106 aa).

It belongs to the eukaryotic ATPase subunit F6 family. F-type ATPases have 2 components, CF(1) - the catalytic core - and CF(0) - the membrane proton channel. CF(0) seems to have nine subunits: a, b, c, d, e, f, g, F6 and 8 (or A6L).

It localises to the mitochondrion. The protein resides in the mitochondrion inner membrane. In terms of biological role, mitochondrial membrane ATP synthase (F(1)F(0) ATP synthase or Complex V) produces ATP from ADP in the presence of a proton gradient across the membrane which is generated by electron transport complexes of the respiratory chain. F-type ATPases consist of two structural domains, F(1) - containing the extramembraneous catalytic core and F(0) - containing the membrane proton channel, linked together by a central stalk and a peripheral stalk. During catalysis, ATP synthesis in the catalytic domain of F(1) is coupled via a rotary mechanism of the central stalk subunits to proton translocation. Part of the complex F(0) domain and the peripheric stalk, which acts as a stator to hold the catalytic alpha(3)beta(3) subcomplex and subunit a/ATP6 static relative to the rotary elements. The protein is ATP synthase-coupling factor 6, mitochondrial of Drosophila melanogaster (Fruit fly).